The chain runs to 309 residues: Foldase protein PrsA (309 aa).

A signal peptide spans 1–20; the sequence is MKKKIVAGAVTLLSVAVLAA. A lipid anchor (N-palmitoyl cysteine) is attached at cysteine 21. Cysteine 21 carries S-diacylglycerol cysteine lipidation. Residues 144-241 form the PpiC domain; that stretch reads TPEVTAQIIK…ASYYIVKLVS (98 aa).

Belongs to the PrsA family.

It localises to the cell membrane. The catalysed reaction is [protein]-peptidylproline (omega=180) = [protein]-peptidylproline (omega=0). Functionally, plays a major role in protein secretion by helping the post-translocational extracellular folding of several secreted proteins. This chain is Foldase protein PrsA, found in Streptococcus gordonii (strain Challis / ATCC 35105 / BCRC 15272 / CH1 / DL1 / V288).